Reading from the N-terminus, the 710-residue chain is MGRARKPPPALHRHCEGCFNRHCHVPVEPSVSCLVISCHLLCGATFHMCKESEHTLLCPLEQVPCLNSEYGCPLSMARHKLAKHLQVCPASVVCCSMEWIRWPNVDSETFLHENIMKETPSEECLDTALALQDQKVLFRSLKMVELFPETRDATEEEPDMNGDTSWEETGGAVGGVDARLAPNSCLPATSRQMMELSQEERDALAKTKEGMDLDKFGKWESMFSKEHAASVLTGSLGKSEDKNGDVAGKEQCSSNVRIGDAEGSAERRGPQESQKSQELPATMEMTGLAPWQDGVLERLKTAVDAKDYNMYLVHNGRMLIHFGQMPACTPKERDFVYGNLEAQEVKTVYTFKIPVSYCGKRARLGDAMLKCRPSEHKAVDTSDLGISVEDLPKSDLIKTTLQCALERELKGHVISESRSIDGLFMDLATQTYNFEPEQFSSETVLADLLGTAQPGGLHVELHSECVTRRHNKSSSAFTFTCNKFFRRDEFPLHFKNVHTDIQSSLDGWFQHRCPLAYLGCTFVQNHFRPPGQKAKVIYSQELKTFAIKPEVAPELSEKWKSDHLSGRDGKSLNSLTSLPLEVLQYIAGFLDSISLSQLSQVSVLMRNICATLLQERGMVLSQWKKKRYSHGGTSWKVHNQIWQFSSLFSKINSWEFNDVTSMSEHLKTCPFNIVERKTDPIRLTSMCQPQEKARESLVSTFRARPRGRHF.

The segment at glutamate 53 to asparagine 114 adopts a TRAF-type zinc-finger fold. 2 disordered regions span residues aspartate 152–glycine 174 and glycine 234–leucine 279. The span at lysine 238–glycine 248 shows a compositional bias: basic and acidic residues. Positions leucine 572–lysine 626 constitute an F-box domain.

In terms of assembly, directly interacts with SKP1 and CUL1. As to expression, expressed only in heart and skeletal muscle.

It is found in the cytoplasm. Probable substrate-recognition component of the SCF (SKP1-CUL1-F-box protein)-type E3 ubiquitin ligase complex that may function in myogenesis. The polypeptide is F-box only protein 40 (Fbxo40) (Mus musculus (Mouse)).